We begin with the raw amino-acid sequence, 596 residues long: F-box/WD repeat-containing protein 8 (596 aa).

The residue at position 1 (M1) is an N-acetylmethionine. Residues 21–95 (QVLRRRRRLE…PDRDAAEPEP (75 aa)) are disordered. Residues 29 to 43 (LEAGERRPRRPEAGA) are compositionally biased toward basic and acidic residues. Low complexity predominate over residues 44 to 64 (RGEPASGYLGLAQGLLEGAGR). Residues 71-91 (GRTDRKDVSSRSRSPPDRDAA) show a composition bias toward basic and acidic residues. S82 and S84 each carry phosphoserine. The region spanning 111–157 (PFFDVHLPYELAINIFQYLNRRELGLCAQVSKTWKVIAEDEVLWYRL) is the F-box domain. WD repeat units lie at residues 199–248 (AVSE…LESE), 257–297 (QPYV…FEHD), 298–338 (ARIQ…SEFE), 339–381 (VQKL…LHYV), 382–427 (YGQP…SKLG), 428–473 (NALG…SAHQ), 474–511 (LGVSAVQMDDWKIVSGGEEGLVSVWDYRMNQKLWEVHS), and 512–559 (RHPV…AYEF).

Component of the Cul7-RING(FBXW8) complex consisting of CUL7, RBX1, SKP1 and FBXW8; within the complex interacts with CUL7 and SKP1. Interacts with GLMN isoform 1. Interacts with OBSL1, CUL1, CUL2, CCT6B, PFDN5, CCT2, CCT3, CCT6A, CCT7, VBP1, CCDC8, ARF1, TRIP13, PDCD5 and GORASP1. Interacts with MAP4K1/HPK1 (when autophosphorylated). Associated component of the 3M complex. Interacts with POUF51 (when phosphorylated on 'Ser-347'). Phosphorylation at Ser-84 by mTORC2 promotes FBXW8 stabilization, allowing its translocation to the cytosol in response to insulin. As to expression, expressed in placenta and embryonic brain (at protein level).

The protein localises to the cytoplasm. It is found in the perinuclear region. Its subcellular location is the golgi apparatus. It localises to the cytosol. It functions in the pathway protein modification; protein ubiquitination. Functionally, substrate-recognition component of the Cul7-RING(FBXW8) ubiquitin ligase complex, which mediates the ubiquitination and subsequent proteasomal degradation of target proteins. The Cul7-RING(FBXW8) complex mediates ubiquitination and consequent degradation of GORASP1, acting as a component of the ubiquitin ligase pathway that regulates Golgi morphogenesis and dendrite patterning in brain. Mediates ubiquitination and degradation of IRS1 in a mTOR-dependent manner: the Cul7-RING(FBXW8) complex recognizes and binds IRS1 previously phosphorylated by S6 kinase (RPS6KB1 or RPS6KB2). The Cul7-RING(FBXW8) complex also mediates ubiquitination of MAP4K1/HPK1: recognizes and binds autophosphorylated MAP4K1/HPK1, leading to its degradation, thereby affecting cell proliferation and differentiation. The Cul7-RING(FBXW8) complex also mediates ubiquitination of phosphorylated cyclin-D1 (CCND1). The Cul7-RING(FBXW8) complex is however not a major regulator of CCND1 stability during the G1/S transition. Associated component of the 3M complex, suggesting that it mediates some of 3M complex functions. This is F-box/WD repeat-containing protein 8 (Fbxw8) from Rattus norvegicus (Rat).